A 151-amino-acid polypeptide reads, in one-letter code: Large ribosomal subunit protein bL9 (151 aa).

The protein belongs to the bacterial ribosomal protein bL9 family.

In terms of biological role, binds to the 23S rRNA. This is Large ribosomal subunit protein bL9 from Mycolicibacterium vanbaalenii (strain DSM 7251 / JCM 13017 / BCRC 16820 / KCTC 9966 / NRRL B-24157 / PYR-1) (Mycobacterium vanbaalenii).